Consider the following 243-residue polypeptide: Cell division protein ZipA (243 aa).

The Periplasmic portion of the chain corresponds to 1-4; the sequence is MSDM. The chain crosses the membrane as a helical span at residues 5-25; it reads AMIRIGILIAGLLLVAAIFLF. The Cytoplasmic segment spans residues 26-243; that stretch reads GRPKKSPQGR…APPLTKSPRW (218 aa). A disordered region spans residues 30-89; that stretch reads KSPQGRRVDKGEGQPRERREPVISSEFGAEGDAAERAEGVEQSELNLEGQDASGGNEVGK. Residues 35-50 are compositionally biased toward basic and acidic residues; sequence RRVDKGEGQPRERREP.

It belongs to the ZipA family. Interacts with FtsZ via their C-terminal domains.

The protein resides in the cell inner membrane. Functionally, essential cell division protein that stabilizes the FtsZ protofilaments by cross-linking them and that serves as a cytoplasmic membrane anchor for the Z ring. Also required for the recruitment to the septal ring of downstream cell division proteins. The sequence is that of Cell division protein ZipA from Xanthomonas axonopodis pv. citri (strain 306).